Consider the following 490-residue polypeptide: Muscarinic acetylcholine receptor M4 (490 aa).

Topologically, residues 1 to 42 are extracellular; that stretch reads MHNLSAQPWQAKMANLTYDNVTLSNRSEVAIQPPTNYKTVEL. N-linked (GlcNAc...) asparagine glycans are attached at residues Asn-3, Asn-15, Asn-20, and Asn-25. The chain crosses the membrane as a helical span at residues 43–64; sequence VFIATVTGSLSLVTVVGNILVM. The Cytoplasmic segment spans residues 65-78; sequence LSIKVNRQLQTVNN. The helical transmembrane segment at 79 to 99 threads the bilayer; sequence YFLFSLACADLIIGVFSMNLY. Over 100 to 116 the chain is Extracellular; sequence TVYIIKGYWPLGAVVCD. An intrachain disulfide couples Cys-115 to Cys-195. A helical transmembrane segment spans residues 117 to 138; that stretch reads LWLALDYVVSNASVMNLLIISF. Over 139–158 the chain is Cytoplasmic; that stretch reads DRYFCVTKPLTYPARRTTKM. The chain crosses the membrane as a helical span at residues 159–181; sequence AGLMIAAAWILSFILWAPAILFW. Residues 182–203 lie on the Extracellular side of the membrane; that stretch reads QFIVGKRTVHERECYIQFLSNP. A helical transmembrane segment spans residues 204 to 226; it reads AVTFGTAIAAFYLPVVIMTVLYI. At 227-412 the chain is on the cytoplasmic side; that stretch reads HISLASRSRV…AAREKKVTRT (186 aa). Positions 236-250 are enriched in basic residues; the sequence is VRRHKPESRKERKGK. Residues 236 to 343 are disordered; the sequence is VRRHKPESRK…HPRVNPTSKW (108 aa). Residues 270 to 285 show a composition bias toward basic and acidic residues; sequence RAVEVKEEVRNGKVDD. 2 stretches are compositionally biased toward polar residues: residues 287-296 and 304-314; these read PSAQTEATGQ and NESSTVSMTQT. A helical transmembrane segment spans residues 413 to 433; that stretch reads IFAILLAFILTWTPYNVMVLI. Topologically, residues 434-447 are extracellular; it reads NTFCETCVPETVWS. A helical transmembrane segment spans residues 448 to 467; sequence IGYWLCYVNSTINPACYALC. At 468–490 the chain is on the cytoplasmic side; it reads NATFKKTFKHLLMCQYRNIGTAR.

Belongs to the G-protein coupled receptor 1 family. Muscarinic acetylcholine receptor subfamily. CHRM4 sub-subfamily. As to expression, expressed in heart and brain.

Its subcellular location is the cell membrane. It localises to the postsynaptic cell membrane. The muscarinic acetylcholine receptor mediates various cellular responses, including inhibition of adenylate cyclase, breakdown of phosphoinositides and modulation of potassium channels through the action of G proteins. Primary transducing effect is inhibition of adenylate cyclase. May couple to multiple functional responses in cell lines. The protein is Muscarinic acetylcholine receptor M4 (CHRM4) of Gallus gallus (Chicken).